Reading from the N-terminus, the 198-residue chain is Protein GrpE (198 aa).

Residues 1–21 (MMKKAEDPLQDREGTIQEHTE) show a composition bias toward basic and acidic residues. The tract at residues 1 to 56 (MMKKAEDPLQDREGTIQEHTEGQAGTAAADQSAAVETPESRIAGLEREVQAEKEQN) is disordered. A compositionally biased stretch (low complexity) spans 22–34 (GQAGTAAADQSAA). Residues 44–56 (GLEREVQAEKEQN) are compositionally biased toward basic and acidic residues.

This sequence belongs to the GrpE family. In terms of assembly, homodimer.

The protein localises to the cytoplasm. Participates actively in the response to hyperosmotic and heat shock by preventing the aggregation of stress-denatured proteins, in association with DnaK and GrpE. It is the nucleotide exchange factor for DnaK and may function as a thermosensor. Unfolded proteins bind initially to DnaJ; upon interaction with the DnaJ-bound protein, DnaK hydrolyzes its bound ATP, resulting in the formation of a stable complex. GrpE releases ADP from DnaK; ATP binding to DnaK triggers the release of the substrate protein, thus completing the reaction cycle. Several rounds of ATP-dependent interactions between DnaJ, DnaK and GrpE are required for fully efficient folding. This chain is Protein GrpE, found in Chlorobium luteolum (strain DSM 273 / BCRC 81028 / 2530) (Pelodictyon luteolum).